A 164-amino-acid chain; its full sequence is Phosphopantetheine adenylyltransferase (164 aa).

T10 contributes to the substrate binding site. ATP is bound by residues 10 to 11 and H18; that span reads TF. The substrate site is built by K42, T79, and R93. ATP-binding positions include 94–96, E104, and 129–135; these read GLR and NQIISSR.

The protein belongs to the bacterial CoaD family. As to quaternary structure, homohexamer. Requires Mg(2+) as cofactor.

It is found in the cytoplasm. It carries out the reaction (R)-4'-phosphopantetheine + ATP + H(+) = 3'-dephospho-CoA + diphosphate. It functions in the pathway cofactor biosynthesis; coenzyme A biosynthesis; CoA from (R)-pantothenate: step 4/5. In terms of biological role, reversibly transfers an adenylyl group from ATP to 4'-phosphopantetheine, yielding dephospho-CoA (dPCoA) and pyrophosphate. The protein is Phosphopantetheine adenylyltransferase of Pelagibacter ubique (strain HTCC1062).